The chain runs to 138 residues: Transcription antitermination protein NusB (138 aa).

Belongs to the NusB family.

In terms of biological role, involved in transcription antitermination. Required for transcription of ribosomal RNA (rRNA) genes. Binds specifically to the boxA antiterminator sequence of the ribosomal RNA (rrn) operons. The chain is Transcription antitermination protein NusB from Alkaliphilus oremlandii (strain OhILAs) (Clostridium oremlandii (strain OhILAs)).